The sequence spans 300 residues: Ribosomal RNA small subunit methyltransferase H (300 aa).

Residues 36–38 (GGH), aspartate 55, leucine 89, aspartate 103, and glutamine 110 each bind S-adenosyl-L-methionine.

The protein belongs to the methyltransferase superfamily. RsmH family.

It localises to the cytoplasm. The catalysed reaction is cytidine(1402) in 16S rRNA + S-adenosyl-L-methionine = N(4)-methylcytidine(1402) in 16S rRNA + S-adenosyl-L-homocysteine + H(+). In terms of biological role, specifically methylates the N4 position of cytidine in position 1402 (C1402) of 16S rRNA. The protein is Ribosomal RNA small subunit methyltransferase H of Thermotoga neapolitana (strain ATCC 49049 / DSM 4359 / NBRC 107923 / NS-E).